The chain runs to 124 residues: MPTLQQLVRKGRIQKHTKTKTPALNNSPQKRGICIRSYTITPKKPNSALRKVARVRLTSKLEITAYIPGIGHNIQEHSVLLIRGGRVKDLPGVRYQIIRGTRDVSGVTARRQSHSKYGTKKVKN.

The protein belongs to the universal ribosomal protein uS12 family. In terms of assembly, part of the 30S ribosomal subunit.

It localises to the plastid. With S4 and S5 plays an important role in translational accuracy. Located at the interface of the 30S and 50S subunits. In Helicosporidium sp. subsp. Simulium jonesii (Green alga), this protein is Small ribosomal subunit protein uS12c (rps12).